Reading from the N-terminus, the 336-residue chain is Abasic site processing protein HMCES (336 aa).

Cys-2 (nucleophile) is an active-site residue. The residue at position 2 (Cys-2) is a Thiazolidine linkage to a ring-opened DNA abasic site. Positions 29-38 (QPEWLREGRY) are enriched in basic and acidic residues. Residues 29–52 (QPEWLREGRYRPSYNKGPQSSGPV) are disordered. Glu-127 is a catalytic residue. The interval 283–336 (LKSSQEGSPQKKEDTLPRWKSQFIHSPSPKKSSAGILRQWLGQEGGPPAKKQKA) is disordered.

This sequence belongs to the SOS response-associated peptidase family.

The protein resides in the chromosome. Formation and reversal of DNA-protein cross-link depends on DNA context. Catalyzes formation of the thiazolidine linkage in presence of abasic sites in single-stranded DNA. Mediates the reversal of the thiazolidine cross-link in presence of double stranded DNA. Functionally, sensor of abasic sites in single-stranded DNA (ssDNA) required to preserve genome integrity by promoting error-free repair of abasic sites. Acts as an enzyme that recognizes and binds abasic sites in ssDNA at replication forks and chemically modifies the lesion by forming a covalent cross-link with DNA: forms a stable thiazolidine linkage between a ring-opened abasic site and the alpha-amino and sulfhydryl substituents of its N-terminal catalytic cysteine residue. The HMCES DNA-protein cross-link is then either reversed or degraded. HMCES is able to catalyze the reversal of its thiazolidine cross-link and cycle between a cross-link and a non-cross-linked state depending on DNA context: mediates self-reversal of the thiazolidine cross-link in double stranded DNA, allowing APEX1 to initiate downstream repair of abasic sites. The HMCES DNA-protein cross-link can also be degraded by the SPRTN metalloprotease following unfolding by the BRIP1/FANCJ helicase. Promotes error-free repair of abasic sites by protecting abasic sites from translesion synthesis (TLS) polymerases and endonucleases that are error-prone and would generate mutations and double-strand breaks. Acts as a protease: mediates autocatalytic processing of its N-terminal methionine in order to expose the catalytic cysteine. The HMCES DNA-protein cross-link is then either reversed or degraded. According to a model, the HMCES DNA-protein cross-link. This Gallus gallus (Chicken) protein is Abasic site processing protein HMCES.